A 453-amino-acid chain; its full sequence is Serine/threonine-protein phosphatase 2A regulatory subunit B'' subunit gamma (453 aa).

2 consecutive EF-hand domains span residues 273-308 (PSAL…TMTN) and 341-376 (KEPA…IQEL). Residues Asp286, Asp288, Asn290, Met292, and Glu297 each coordinate Ca(2+).

In terms of assembly, interacts with MCM3AP/GANP, PPP5C, and the phosphatase 2A core enzyme composed of the PPP2CA catalytic subunit and the constant regulatory subunit PPP2R1A. Finds in a complex with ABCB1, TFPI2 and PPP2R3C; leading to the dephosphorylation of ABCB1.

Its subcellular location is the nucleus. The protein localises to the cytoplasm. In terms of biological role, may regulate MCM3AP phosphorylation through phosphatase recruitment. May act as a negative regulator of ABCB1 expression and function through the dephosphorylation of ABCB1 by TFPI2/PPP2R3C complex. May play a role in the activation-induced cell death of B-cells. This Bos taurus (Bovine) protein is Serine/threonine-protein phosphatase 2A regulatory subunit B'' subunit gamma (PPP2R3C).